The chain runs to 824 residues: Leucine--tRNA ligase (824 aa).

The short motif at 42–52 is the 'HIGH' region element; that stretch reads PYPSGRIHMGH. The 'KMSKS' region motif lies at 581–585; sequence KMSKS. K584 contributes to the ATP binding site.

It belongs to the class-I aminoacyl-tRNA synthetase family.

It localises to the cytoplasm. It catalyses the reaction tRNA(Leu) + L-leucine + ATP = L-leucyl-tRNA(Leu) + AMP + diphosphate. The sequence is that of Leucine--tRNA ligase from Geotalea daltonii (strain DSM 22248 / JCM 15807 / FRC-32) (Geobacter daltonii).